The sequence spans 416 residues: Ribulose bisphosphate carboxylase large chain (416 aa).

The substrate site is built by Asn-102 and Thr-152. Residue Lys-154 is the Proton acceptor of the active site. Residue Lys-156 coordinates substrate. Residues Lys-180, Asp-182, and Glu-183 each contribute to the Mg(2+) site. At Lys-180 the chain carries N6-carboxylysine. Catalysis depends on His-273, which acts as the Proton acceptor. Positions 274, 306, and 358 each coordinate substrate.

This sequence belongs to the RuBisCO large chain family. Type I subfamily. Heterohexadecamer of 8 large chains and 8 small chains; disulfide-linked. The disulfide link is formed within the large subunit homodimers. Requires Mg(2+) as cofactor. Post-translationally, the disulfide bond which can form in the large chain dimeric partners within the hexadecamer appears to be associated with oxidative stress and protein turnover.

It localises to the plastid. The protein resides in the chloroplast. The catalysed reaction is 2 (2R)-3-phosphoglycerate + 2 H(+) = D-ribulose 1,5-bisphosphate + CO2 + H2O. The enzyme catalyses D-ribulose 1,5-bisphosphate + O2 = 2-phosphoglycolate + (2R)-3-phosphoglycerate + 2 H(+). Its function is as follows. RuBisCO catalyzes two reactions: the carboxylation of D-ribulose 1,5-bisphosphate, the primary event in carbon dioxide fixation, as well as the oxidative fragmentation of the pentose substrate in the photorespiration process. Both reactions occur simultaneously and in competition at the same active site. The chain is Ribulose bisphosphate carboxylase large chain (rbcL) from Arthropteris beckleri (Fern).